The sequence spans 151 residues: Large ribosomal subunit protein uL15 (151 aa).

The interval 1-62 (MVKLNELFPK…GGQMPLYRRV (62 aa)) is disordered. The span at 11-20 (HGSRKAKRRI) shows a compositional bias: basic residues.

The protein belongs to the universal ribosomal protein uL15 family. In terms of assembly, part of the 50S ribosomal subunit.

Functionally, binds to the 23S rRNA. This is Large ribosomal subunit protein uL15 from Elusimicrobium minutum (strain Pei191).